The primary structure comprises 177 residues: Large ribosomal subunit protein uL6 (177 aa).

It belongs to the universal ribosomal protein uL6 family. As to quaternary structure, part of the 50S ribosomal subunit.

This protein binds to the 23S rRNA, and is important in its secondary structure. It is located near the subunit interface in the base of the L7/L12 stalk, and near the tRNA binding site of the peptidyltransferase center. The protein is Large ribosomal subunit protein uL6 of Acinetobacter baylyi (strain ATCC 33305 / BD413 / ADP1).